Here is a 358-residue protein sequence, read N- to C-terminus: Peroxidase 12 (358 aa).

The N-terminal stretch at 1–31 (MTKAYSTRVLTFLILISLMAVTLNLFPTVEA) is a signal peptide. 4 disulfide bridges follow: cysteine 53/cysteine 134, cysteine 86/cysteine 91, cysteine 140/cysteine 335, and cysteine 220/cysteine 247. Catalysis depends on histidine 84, which acts as the Proton acceptor. Aspartate 85, valine 88, glycine 90, glutamate 92, and serine 94 together coordinate Ca(2+). Substrate is bound at residue proline 183. N-linked (GlcNAc...) asparagine glycans are attached at residues asparagine 188 and asparagine 202. Residue histidine 213 coordinates heme b. A Ca(2+)-binding site is contributed by threonine 214. Asparagine 251 is a glycosylation site (N-linked (GlcNAc...) asparagine). Positions 259, 262, and 267 each coordinate Ca(2+). The N-linked (GlcNAc...) asparagine glycan is linked to asparagine 334.

This sequence belongs to the peroxidase family. Classical plant (class III) peroxidase subfamily. Heme b is required as a cofactor. It depends on Ca(2+) as a cofactor. Expressed in roots and leaves.

Its subcellular location is the secreted. The protein resides in the vacuole. The enzyme catalyses 2 a phenolic donor + H2O2 = 2 a phenolic radical donor + 2 H2O. In terms of biological role, removal of H(2)O(2), oxidation of toxic reductants, biosynthesis and degradation of lignin, suberization, auxin catabolism, response to environmental stresses such as wounding, pathogen attack and oxidative stress. These functions might be dependent on each isozyme/isoform in each plant tissue. Its function is as follows. Exhibits a Ca(2+)-pectate binding affinity which could be interpreted in vivo as a specificity to interact with the pectic structure of the cell wall. The protein is Peroxidase 12 (PER12) of Arabidopsis thaliana (Mouse-ear cress).